A 199-amino-acid chain; its full sequence is ATP-dependent Clp protease proteolytic subunit (199 aa).

The active-site Nucleophile is Ser-98. The active site involves His-123.

This sequence belongs to the peptidase S14 family. In terms of assembly, fourteen ClpP subunits assemble into 2 heptameric rings which stack back to back to give a disk-like structure with a central cavity, resembling the structure of eukaryotic proteasomes.

The protein resides in the cytoplasm. The enzyme catalyses Hydrolysis of proteins to small peptides in the presence of ATP and magnesium. alpha-casein is the usual test substrate. In the absence of ATP, only oligopeptides shorter than five residues are hydrolyzed (such as succinyl-Leu-Tyr-|-NHMec, and Leu-Tyr-Leu-|-Tyr-Trp, in which cleavage of the -Tyr-|-Leu- and -Tyr-|-Trp bonds also occurs).. Its function is as follows. Cleaves peptides in various proteins in a process that requires ATP hydrolysis. Has a chymotrypsin-like activity. Plays a major role in the degradation of misfolded proteins. The chain is ATP-dependent Clp protease proteolytic subunit from Ehrlichia chaffeensis (strain ATCC CRL-10679 / Arkansas).